A 516-amino-acid chain; its full sequence is L-amino acid oxidase bordonein-L (516 aa).

The signal sequence occupies residues 1 to 18; it reads MNVFFMFSLLFLAALGSC. An intrachain disulfide couples cysteine 28 to cysteine 189. FAD is bound by residues 61–62, 81–82, arginine 89, and 103–106; these read MA, EA, and GPMR. Substrate is bound by residues arginine 106 and histidine 239. Residue valine 279 coordinates FAD. Cysteine 349 and cysteine 430 are oxidised to a cystine. A glycan (N-linked (GlcNAc...) asparagine) is linked at asparagine 379. Residue tyrosine 390 coordinates substrate. FAD is bound by residues glutamate 475 and 482–487; that span reads GWIDST. Residue 482–483 coordinates substrate; the sequence is GW.

In terms of assembly, homodimer; non-covalently linked. Requires FAD as cofactor. In terms of processing, N-glycosylated. N-glycan probably consists of the disaccharide N-acetylglucosamine-fucose (HexNAc-Fuc). Expressed by the venom gland.

It is found in the secreted. The enzyme catalyses an L-alpha-amino acid + O2 + H2O = a 2-oxocarboxylate + H2O2 + NH4(+). It catalyses the reaction L-leucine + O2 + H2O = 4-methyl-2-oxopentanoate + H2O2 + NH4(+). It carries out the reaction L-phenylalanine + O2 + H2O = 3-phenylpyruvate + H2O2 + NH4(+). The catalysed reaction is L-tryptophan + O2 + H2O = indole-3-pyruvate + H2O2 + NH4(+). The enzyme catalyses L-methionine + O2 + H2O = 4-methylsulfanyl-2-oxobutanoate + H2O2 + NH4(+). It catalyses the reaction L-isoleucine + O2 + H2O = (S)-3-methyl-2-oxopentanoate + H2O2 + NH4(+). It carries out the reaction L-arginine + O2 + H2O = 5-guanidino-2-oxopentanoate + H2O2 + NH4(+). The catalysed reaction is L-histidine + O2 + H2O = 3-(imidazol-5-yl)pyruvate + H2O2 + NH4(+). Catalyzes an oxidative deamination of predominantly hydrophobic and aromatic L-amino acids, thus producing hydrogen peroxide that may contribute to the diverse toxic effects of this enzyme. Is highly active on L-Met, L-Leu, L-Trp, and L-Phe, moderately active on L-Ile, L-His, and L-Arg, and weakly or not active on L-Gln, L-Val, L-Asn, L-Ala, L-Lys, L-Ser, L-Thr, L-Pro, L-Asp, L-Gly, L-Tyr, L-Cys and L-Glu. This enzyme exhibits diverse biological activities, such as hemorrhage, hemolysis, edema, apoptosis of vascular endothelial cells or tumor cell lines, antibacterial and antiparasitic activities, as well as regulation of platelet aggregation. Its effect on platelets is controversial, since it either induces aggregation or inhibits agonist-induced aggregation. These different effects are probably due to different experimental conditions. In vitro, the enzyme exhibits cytotoxicity against fibroblast cell line and kills Leishmania amazonensis promastigotes, intensified by substrate addition. In Crotalus durissus terrificus (South American rattlesnake), this protein is L-amino acid oxidase bordonein-L.